The sequence spans 280 residues: Phosphatidylserine decarboxylase proenzyme (280 aa).

Catalysis depends on charge relay system; for autoendoproteolytic cleavage activity residues Asp88, His145, and Ser248. Residue Ser248 is the Schiff-base intermediate with substrate; via pyruvic acid; for decarboxylase activity of the active site. Ser248 carries the post-translational modification Pyruvic acid (Ser); by autocatalysis.

Belongs to the phosphatidylserine decarboxylase family. PSD-B subfamily. Prokaryotic type I sub-subfamily. Heterodimer of a large membrane-associated beta subunit and a small pyruvoyl-containing alpha subunit. Pyruvate serves as cofactor. In terms of processing, is synthesized initially as an inactive proenzyme. Formation of the active enzyme involves a self-maturation process in which the active site pyruvoyl group is generated from an internal serine residue via an autocatalytic post-translational modification. Two non-identical subunits are generated from the proenzyme in this reaction, and the pyruvate is formed at the N-terminus of the alpha chain, which is derived from the carboxyl end of the proenzyme. The autoendoproteolytic cleavage occurs by a canonical serine protease mechanism, in which the side chain hydroxyl group of the serine supplies its oxygen atom to form the C-terminus of the beta chain, while the remainder of the serine residue undergoes an oxidative deamination to produce ammonia and the pyruvoyl prosthetic group on the alpha chain. During this reaction, the Ser that is part of the protease active site of the proenzyme becomes the pyruvoyl prosthetic group, which constitutes an essential element of the active site of the mature decarboxylase.

Its subcellular location is the cell membrane. It carries out the reaction a 1,2-diacyl-sn-glycero-3-phospho-L-serine + H(+) = a 1,2-diacyl-sn-glycero-3-phosphoethanolamine + CO2. It participates in phospholipid metabolism; phosphatidylethanolamine biosynthesis; phosphatidylethanolamine from CDP-diacylglycerol: step 2/2. Catalyzes the formation of phosphatidylethanolamine (PtdEtn) from phosphatidylserine (PtdSer). This Methylobacillus flagellatus (strain ATCC 51484 / DSM 6875 / VKM B-1610 / KT) protein is Phosphatidylserine decarboxylase proenzyme.